The primary structure comprises 188 residues: 3-hydroxyanthranilate 3,4-dioxygenase 2 (188 aa).

O2 is bound at residue Arg-46. Fe cation is bound by residues His-50, Glu-70, and His-108. Residue Glu-70 coordinates substrate. 2 residues coordinate substrate: Arg-112 and Glu-122.

The protein belongs to the 3-HAO family. It depends on Fe(2+) as a cofactor.

Its subcellular location is the cytoplasm. The catalysed reaction is 3-hydroxyanthranilate + O2 = (2Z,4Z)-2-amino-3-carboxymuconate 6-semialdehyde. It functions in the pathway cofactor biosynthesis; NAD(+) biosynthesis; quinolinate from L-kynurenine: step 3/3. Its function is as follows. Catalyzes the oxidative ring opening of 3-hydroxyanthranilate to 2-amino-3-carboxymuconate semialdehyde, which spontaneously cyclizes to quinolinate. This is 3-hydroxyanthranilate 3,4-dioxygenase 2 (bna1-2) from Aspergillus fumigatus (strain CBS 144.89 / FGSC A1163 / CEA10) (Neosartorya fumigata).